Reading from the N-terminus, the 577-residue chain is Cell pattern formation-associated protein stuA (577 aa).

The tract at residues 1–41 (MNQPQPYMDQHAPAPPPASNMTQYSNYGAPQPLQPATHGYG) is disordered. A compositionally biased stretch (polar residues) spans 19–28 (SNMTQYSNYG). In terms of domain architecture, HTH APSES-type spans 111–217 (RVTATLWEDE…HNIGALLYHP (107 aa)). The H-T-H motif DNA-binding region spans 145–166 (GTKLLNVAGMTRGRRDGILKSE). Disordered stretches follow at residues 228–487 (ATMA…QLPS) and 518–577 (QYPA…AVRR). Polar residues-rich tracts occupy residues 238-251 (SQEYMRTPQGTQAP) and 319-333 (AVNSASTPPSNSQGM). The span at 334-350 (PQYQTSQPPYTQSYSTP) shows a compositional bias: low complexity. Over residues 351-364 (GSYSQPQYTHQQPG) the composition is skewed to polar residues. Basic and acidic residues predominate over residues 390–399 (AENDHPDHKV). Residues 465–479 (TPRTTNPYTGYNNTP) are compositionally biased toward low complexity. The tract at residues 526–552 (KRGREDDDQVDPYGRPSSALGEHKRQR) is nuclear localization domain.

The protein belongs to the EFG1/PHD1/stuA family.

The protein resides in the nucleus. Functionally, transcription factor that regulates asexual reproduction. Binds the StuA-response elements (StRE) with the consensus sequence 5'-(A/T)CGCG(T/A)N(A/C)-3' at the promoters of target genes. The sequence is that of Cell pattern formation-associated protein stuA from Dothistroma septosporum (strain NZE10 / CBS 128990) (Red band needle blight fungus).